The chain runs to 294 residues: Casein kinase II subunit beta (294 aa).

Disordered regions lie at residues 66-90 (DHNT…SKRN) and 269-294 (KRME…MASE). Over residues 70-87 (DNTTTNTSNNNDSRNGTS) the composition is skewed to low complexity. Residues 273 to 288 (EDDEEEEDEVEEEDDD) show a composition bias toward acidic residues.

Belongs to the casein kinase 2 subunit beta family. As to quaternary structure, tetramer composed of two alpha chains, one beta chain and one beta' chain. In terms of processing, phosphorylated by alpha subunit.

Regulatory subunit of casein kinase II/CK2. As part of the kinase complex regulates the basal catalytic activity of the alpha subunit a constitutively active serine/threonine-protein kinase that phosphorylates a large number of substrates containing acidic residues C-terminal to the phosphorylated serine or threonine. The sequence is that of Casein kinase II subunit beta (CKB1) from Candida albicans (Yeast).